Consider the following 367-residue polypeptide: 3-dehydroquinate synthase (367 aa).

NAD(+)-binding positions include 112–116 (GVIGD), 136–137 (TT), Lys-149, Lys-158, and 176–179 (TLKT). 3 residues coordinate Zn(2+): Glu-191, His-256, and His-273.

Belongs to the sugar phosphate cyclases superfamily. Dehydroquinate synthase family. NAD(+) serves as cofactor. The cofactor is Co(2+). It depends on Zn(2+) as a cofactor.

It is found in the cytoplasm. The catalysed reaction is 7-phospho-2-dehydro-3-deoxy-D-arabino-heptonate = 3-dehydroquinate + phosphate. It participates in metabolic intermediate biosynthesis; chorismate biosynthesis; chorismate from D-erythrose 4-phosphate and phosphoenolpyruvate: step 2/7. Functionally, catalyzes the conversion of 3-deoxy-D-arabino-heptulosonate 7-phosphate (DAHP) to dehydroquinate (DHQ). This chain is 3-dehydroquinate synthase, found in Prochlorococcus marinus (strain SARG / CCMP1375 / SS120).